The chain runs to 173 residues: Histone deacetylase complex subunit SAP30 homolog (173 aa).

The Atypical zinc-finger motif lies at Cys21–His69.

Belongs to the SAP30 family. In terms of assembly, component of the class 1 Sin3-histone deacetylase complex (HDAC).

Its subcellular location is the nucleus. Functionally, required for the function of the class 1 Sin3-histone deacetylase complex (HDAC). This Aedes aegypti (Yellowfever mosquito) protein is Histone deacetylase complex subunit SAP30 homolog.